Reading from the N-terminus, the 181-residue chain is Oligoribonuclease (181 aa).

The Exonuclease domain maps to Leu8–Leu171. Tyr129 is a catalytic residue.

The protein belongs to the oligoribonuclease family.

The protein localises to the cytoplasm. Functionally, 3'-to-5' exoribonuclease specific for small oligoribonucleotides. In Bordetella bronchiseptica (strain ATCC BAA-588 / NCTC 13252 / RB50) (Alcaligenes bronchisepticus), this protein is Oligoribonuclease.